The primary structure comprises 153 residues: UPF0260 protein Plav_0898 (153 aa).

This sequence belongs to the UPF0260 family.

This chain is UPF0260 protein Plav_0898, found in Parvibaculum lavamentivorans (strain DS-1 / DSM 13023 / NCIMB 13966).